Consider the following 338-residue polypeptide: Holliday junction branch migration complex subunit RuvB (338 aa).

Residues 1–184 (MTEEERLLSA…FGIISHMEYY (184 aa)) are large ATPase domain (RuvB-L). ATP is bound by residues Leu23, Arg24, Gly65, Lys68, Thr69, Thr70, 131 to 133 (EDF), Arg174, Tyr184, and Arg221. Mg(2+) is bound at residue Thr69. A small ATPAse domain (RuvB-S) region spans residues 185 to 255 (QEQDLKEIVL…IADKALTLLQ (71 aa)). The tract at residues 258–338 (HQGLDYVDQK…GYDYLEGRKN (81 aa)) is head domain (RuvB-H). Residues Arg313 and Arg318 each coordinate DNA.

This sequence belongs to the RuvB family. Homohexamer. Forms an RuvA(8)-RuvB(12)-Holliday junction (HJ) complex. HJ DNA is sandwiched between 2 RuvA tetramers; dsDNA enters through RuvA and exits via RuvB. An RuvB hexamer assembles on each DNA strand where it exits the tetramer. Each RuvB hexamer is contacted by two RuvA subunits (via domain III) on 2 adjacent RuvB subunits; this complex drives branch migration. In the full resolvosome a probable DNA-RuvA(4)-RuvB(12)-RuvC(2) complex forms which resolves the HJ.

The protein localises to the cytoplasm. It catalyses the reaction ATP + H2O = ADP + phosphate + H(+). Functionally, the RuvA-RuvB-RuvC complex processes Holliday junction (HJ) DNA during genetic recombination and DNA repair, while the RuvA-RuvB complex plays an important role in the rescue of blocked DNA replication forks via replication fork reversal (RFR). RuvA specifically binds to HJ cruciform DNA, conferring on it an open structure. The RuvB hexamer acts as an ATP-dependent pump, pulling dsDNA into and through the RuvAB complex. RuvB forms 2 homohexamers on either side of HJ DNA bound by 1 or 2 RuvA tetramers; 4 subunits per hexamer contact DNA at a time. Coordinated motions by a converter formed by DNA-disengaged RuvB subunits stimulates ATP hydrolysis and nucleotide exchange. Immobilization of the converter enables RuvB to convert the ATP-contained energy into a lever motion, pulling 2 nucleotides of DNA out of the RuvA tetramer per ATP hydrolyzed, thus driving DNA branch migration. The RuvB motors rotate together with the DNA substrate, which together with the progressing nucleotide cycle form the mechanistic basis for DNA recombination by continuous HJ branch migration. Branch migration allows RuvC to scan DNA until it finds its consensus sequence, where it cleaves and resolves cruciform DNA. The sequence is that of Holliday junction branch migration complex subunit RuvB from Enterococcus faecalis (strain ATCC 700802 / V583).